Reading from the N-terminus, the 117-residue chain is Immunoglobulin kappa variable 9-129 (117 aa).

The N-terminal stretch at 1–22 is a signal peptide; sequence MDMRAPAQVFGFLLLWFPGARC. The framework-1 stretch occupies residues 23–45; sequence DIQMTQSPSSLSASLGERVSLTC. A disulfide bond links Cys-45 and Cys-110. Residues 46–56 form a complementarity-determining-1 region; sequence RASQDIHGYLN. The interval 57–71 is framework-2; it reads LFQQKPGETIKHLIY. The segment at 72 to 78 is complementarity-determining-2; the sequence is ETSNLDS. The interval 79–110 is framework-3; the sequence is GVPKRFSGSRSGSDYSLIIGSLESEDFADYYC. The interval 111–117 is complementarity-determining-3; the sequence is LQYASSP.

The sequence is that of Immunoglobulin kappa variable 9-129 from Mus musculus (Mouse).